Reading from the N-terminus, the 1372-residue chain is Serine protease pic autotransporter (1372 aa).

The signal sequence occupies residues 1–55 (MNKVYSLKYCPVTGGLIAVSELARRVIKKTCRRLTHILLAGIPAICLCYSQISQA). In terms of domain architecture, Peptidase S6 spans 56-301 (GIVRSDIAYQ…NVIPTDYLNQ (246 aa)). Active-site charge relay system residues include His-127, Asp-155, and Ser-258. An Autotransporter domain is found at 1106–1372 (DTNGDAGAWA…AVNANFRYMF (267 aa)).

Cleaved to release the mature protein from the outer membrane.

The protein localises to the periplasm. Its subcellular location is the secreted. It is found in the cell surface. It localises to the cell outer membrane. Functionally, involved in intestinal colonization, displays in vitro mucinolytic activity, serum resistance, and hemagglutination. Important to penetrate the intestinal mucus layer. This is Serine protease pic autotransporter (pic) from Escherichia coli O44:H18 (strain 042 / EAEC).